The primary structure comprises 776 residues: Conserved oligomeric Golgi complex subunit 4 (776 aa).

2 positions are modified to phosphoserine: S342 and S345.

The protein belongs to the COG4 family. In terms of assembly, component of the conserved oligomeric Golgi complex which is composed of eight different subunits and is required for normal Golgi morphology and localization.

It is found in the golgi apparatus membrane. Its function is as follows. Required for normal Golgi function. This Drosophila melanogaster (Fruit fly) protein is Conserved oligomeric Golgi complex subunit 4.